Here is a 121-residue protein sequence, read N- to C-terminus: Ig heavy chain V region MPC 11 (121 aa).

The Ig-like domain maps to 1 to 112 (EAQLQQSGAE…NSSPYFDSWG (112 aa)).

The polypeptide is Ig heavy chain V region MPC 11 (Mus musculus (Mouse)).